Reading from the N-terminus, the 347-residue chain is Druantia protein DruD (347 aa).

The protein localises to the cytoplasm. Its function is as follows. Component of antiviral defense system Druantia type I, composed of DruA, DruB, DruC, DruD and DruE. Expression of Druantia in E.coli (strain MG1655) confers resistance to phage lambda, SECphi18, SECphi27 and T4. This chain is Druantia protein DruD, found in Escherichia coli (strain UMEA 4076-1).